The sequence spans 571 residues: Urease subunit alpha (571 aa).

The Urease domain maps to 133 to 571 (GGIDTHIHFI…LPLAQRYFLF (439 aa)). Ni(2+) is bound by residues histidine 138, histidine 140, and lysine 221. Lysine 221 bears the N6-carboxylysine mark. Histidine 223 lines the substrate pocket. Positions 250 and 276 each coordinate Ni(2+). Histidine 324 (proton donor) is an active-site residue. Aspartate 364 lines the Ni(2+) pocket.

This sequence belongs to the metallo-dependent hydrolases superfamily. Urease alpha subunit family. As to quaternary structure, heterotrimer of UreA (gamma), UreB (beta) and UreC (alpha) subunits. Three heterotrimers associate to form the active enzyme. The cofactor is Ni cation. Post-translationally, carboxylation allows a single lysine to coordinate two nickel ions.

Its subcellular location is the cytoplasm. The catalysed reaction is urea + 2 H2O + H(+) = hydrogencarbonate + 2 NH4(+). Its pathway is nitrogen metabolism; urea degradation; CO(2) and NH(3) from urea (urease route): step 1/1. In Corynebacterium efficiens (strain DSM 44549 / YS-314 / AJ 12310 / JCM 11189 / NBRC 100395), this protein is Urease subunit alpha.